Consider the following 502-residue polypeptide: NAD(P)H-quinone oxidoreductase chain 4, chloroplastic (502 aa).

A run of 14 helical transmembrane segments spans residues 4–24, 37–57, 87–107, 113–130, 134–154, 167–187, 213–233, 244–264, 274–294, 315–335, 336–356, 388–408, 419–439, and 464–484; these read FPWL…IFFL, ISIC…HFQL, LGSI…AWPV, LFYF…GLFS, LLLF…LLSM, FILY…GMGL, ILLY…IPLH, HYST…YGLI, AHYL…IYAA, MGFI…GAIL, QILS…TASD, LALP…GLIT, LITF…LSML, and LFIL…PDFV.

This sequence belongs to the complex I subunit 4 family.

It localises to the plastid. The protein localises to the chloroplast thylakoid membrane. The catalysed reaction is a plastoquinone + NADH + (n+1) H(+)(in) = a plastoquinol + NAD(+) + n H(+)(out). It catalyses the reaction a plastoquinone + NADPH + (n+1) H(+)(in) = a plastoquinol + NADP(+) + n H(+)(out). In Lolium perenne (Perennial ryegrass), this protein is NAD(P)H-quinone oxidoreductase chain 4, chloroplastic.